The sequence spans 315 residues: Leucine-rich repeat-containing protein 75B (315 aa).

A disordered region spans residues 1 to 23; that stretch reads MGARLGRRAGPEAGSEAGAAAGC. A compositionally biased stretch (low complexity) spans 11 to 23; that stretch reads PEAGSEAGAAAGC. LRR repeat units lie at residues 182–195 and 207–220; these read LAVLDLSFTGLSDE and LPRLTQLLLNGNRL. The segment at 284–315 is disordered; it reads PEGSAAGATTPASTWDSTAAGLGPEPQACCAR. The segment covering 286–297 has biased composition (low complexity); the sequence is GSAAGATTPAST.

Belongs to the LRRC75 family.

Its function is as follows. May suppress myogenic differentiation by modulating MYOG expression and Erk1/2 signaling. This chain is Leucine-rich repeat-containing protein 75B, found in Homo sapiens (Human).